We begin with the raw amino-acid sequence, 688 residues long: DNA ligase (688 aa).

Residues 51–55 (DSEYD), 100–101 (SL), and E129 contribute to the NAD(+) site. Catalysis depends on K131, which acts as the N6-AMP-lysine intermediate. Residues R152, E189, K308, and K332 each contribute to the NAD(+) site. Zn(2+) is bound by residues C426, C429, C444, and C450. The BRCT domain maps to 609–688 (ADEQPLKGQT…DELLALLANS (80 aa)).

Belongs to the NAD-dependent DNA ligase family. LigA subfamily. Requires Mg(2+) as cofactor. Mn(2+) is required as a cofactor.

The catalysed reaction is NAD(+) + (deoxyribonucleotide)n-3'-hydroxyl + 5'-phospho-(deoxyribonucleotide)m = (deoxyribonucleotide)n+m + AMP + beta-nicotinamide D-nucleotide.. DNA ligase that catalyzes the formation of phosphodiester linkages between 5'-phosphoryl and 3'-hydroxyl groups in double-stranded DNA using NAD as a coenzyme and as the energy source for the reaction. It is essential for DNA replication and repair of damaged DNA. In Shewanella sp. (strain MR-4), this protein is DNA ligase.